A 199-amino-acid chain; its full sequence is dITP/XTP pyrophosphatase (199 aa).

7–12 (SNNRGK) serves as a coordination point for substrate. Catalysis depends on aspartate 68, which acts as the Proton acceptor. Aspartate 68 contributes to the Mg(2+) binding site. Residues alanine 69, 154–157 (FGFD), lysine 177, and 182–183 (HR) contribute to the substrate site.

It belongs to the HAM1 NTPase family. In terms of assembly, homodimer. It depends on Mg(2+) as a cofactor.

The enzyme catalyses XTP + H2O = XMP + diphosphate + H(+). It carries out the reaction dITP + H2O = dIMP + diphosphate + H(+). It catalyses the reaction ITP + H2O = IMP + diphosphate + H(+). Its function is as follows. Pyrophosphatase that catalyzes the hydrolysis of nucleoside triphosphates to their monophosphate derivatives, with a high preference for the non-canonical purine nucleotides XTP (xanthosine triphosphate), dITP (deoxyinosine triphosphate) and ITP. Seems to function as a house-cleaning enzyme that removes non-canonical purine nucleotides from the nucleotide pool, thus preventing their incorporation into DNA/RNA and avoiding chromosomal lesions. In Albidiferax ferrireducens (strain ATCC BAA-621 / DSM 15236 / T118) (Rhodoferax ferrireducens), this protein is dITP/XTP pyrophosphatase.